The chain runs to 199 residues: GTP cyclohydrolase-2 (199 aa).

Position 49–53 (49–53 (RIHSE)) interacts with GTP. Zn(2+)-binding residues include Cys54, Cys65, and Cys67. GTP-binding positions include Gln70, 92–94 (EGR), and Thr114. Asp126 functions as the Proton acceptor in the catalytic mechanism. The Nucleophile role is filled by Arg128. GTP-binding residues include Thr149 and Lys154.

This sequence belongs to the GTP cyclohydrolase II family. As to quaternary structure, homodimer. The cofactor is Zn(2+).

The enzyme catalyses GTP + 4 H2O = 2,5-diamino-6-hydroxy-4-(5-phosphoribosylamino)-pyrimidine + formate + 2 phosphate + 3 H(+). It participates in cofactor biosynthesis; riboflavin biosynthesis; 5-amino-6-(D-ribitylamino)uracil from GTP: step 1/4. Catalyzes the conversion of GTP to 2,5-diamino-6-ribosylamino-4(3H)-pyrimidinone 5'-phosphate (DARP), formate and pyrophosphate. This chain is GTP cyclohydrolase-2, found in Blochmanniella floridana.